We begin with the raw amino-acid sequence, 321 residues long: Ferredoxin--NADP reductase (321 aa).

FAD contacts are provided by aspartate 28, glutamine 36, tyrosine 41, alanine 81, phenylalanine 115, aspartate 274, and serine 315.

It belongs to the ferredoxin--NADP reductase type 2 family. Homodimer. It depends on FAD as a cofactor.

It carries out the reaction 2 reduced [2Fe-2S]-[ferredoxin] + NADP(+) + H(+) = 2 oxidized [2Fe-2S]-[ferredoxin] + NADPH. In Frankia casuarinae (strain DSM 45818 / CECT 9043 / HFP020203 / CcI3), this protein is Ferredoxin--NADP reductase.